Reading from the N-terminus, the 473-residue chain is Photosystem II CP43 reaction center protein (473 aa).

Positions 1–14 are excised as a propeptide; that stretch reads MKTLYSLRRFYHVE. The residue at position 15 (T15) is an N-acetylthreonine. T15 carries the phosphothreonine modification. A run of 5 helical transmembrane segments spans residues 69 to 93, 134 to 155, 178 to 200, 255 to 275, and 291 to 312; these read LFEV…PHLA, LLGP…KDRN, KALY…RKIT, KPFA…LSYS, and WFNN…ASQA. E367 contributes to the [CaMn4O5] cluster binding site. Residues 447 to 471 traverse the membrane as a helical segment; it reads RARAAAAGFEKGIDRDFEPVLSMTP.

This sequence belongs to the PsbB/PsbC family. PsbC subfamily. PSII is composed of 1 copy each of membrane proteins PsbA, PsbB, PsbC, PsbD, PsbE, PsbF, PsbH, PsbI, PsbJ, PsbK, PsbL, PsbM, PsbT, PsbX, PsbY, PsbZ, Psb30/Ycf12, at least 3 peripheral proteins of the oxygen-evolving complex and a large number of cofactors. It forms dimeric complexes. It depends on Binds multiple chlorophylls and provides some of the ligands for the Ca-4Mn-5O cluster of the oxygen-evolving complex. It may also provide a ligand for a Cl- that is required for oxygen evolution. PSII binds additional chlorophylls, carotenoids and specific lipids. as a cofactor.

It localises to the plastid. It is found in the chloroplast thylakoid membrane. Its function is as follows. One of the components of the core complex of photosystem II (PSII). It binds chlorophyll and helps catalyze the primary light-induced photochemical processes of PSII. PSII is a light-driven water:plastoquinone oxidoreductase, using light energy to abstract electrons from H(2)O, generating O(2) and a proton gradient subsequently used for ATP formation. This chain is Photosystem II CP43 reaction center protein, found in Arabis hirsuta (Hairy rock-cress).